A 292-amino-acid polypeptide reads, in one-letter code: Tetratricopeptide repeat protein 1 (292 aa).

The segment at 20-125 is disordered; that stretch reads TDPQEAECLH…SSRLKEEGNE (106 aa). Basic and acidic residues-rich tracts occupy residues 36–49 and 75–85; these read KEQH…KDVD and GADKLENKPED. A compositionally biased stretch (acidic residues) spans 86-98; the sequence is DMNPSELDEEYLM. S90 is modified (phosphoserine). A compositionally biased stretch (basic and acidic residues) spans 99–125; the sequence is ELEKNMPDEEKKRRREESSRLKEEGNE. TPR repeat units lie at residues 116–149, 155–188, and 189–222; these read SSRL…CPSC, SVLF…NPSY, and IRAI…DPSV.

As to quaternary structure, interacts with the GAP domain of NF1. Interacts (via TPR repeats) with HSP90AA1 and HSPA8.

The sequence is that of Tetratricopeptide repeat protein 1 (TTC1) from Bos taurus (Bovine).